A 219-amino-acid chain; its full sequence is Chalcone--flavanone isomerase (219 aa).

Thr50, Asn115, and Ser188 together coordinate substrate.

Belongs to the chalcone isomerase family.

The catalysed reaction is a chalcone = a flavanone.. Its pathway is secondary metabolite biosynthesis; flavonoid biosynthesis. Catalyzes the intramolecular cyclization of bicyclic chalcones into tricyclic (S)-flavanones. Responsible for the isomerization of 4,2',4',6'-tetrahydroxychalcone (also termed chalcone) into naringenin. The sequence is that of Chalcone--flavanone isomerase (CHI) from Clitoria ternatea (Butterfly pea).